The following is a 203-amino-acid chain: MIDRLVRDSRGPVTERNPPHMSLSAGPAEISEGLDNQRTLGVSPLISPALLRQELPVDAAIAKTVAHGRSSAVDILHGDDDRLIVVVGPCSVHDPAAALDYAHRLAEHAAGVRDELHVIMRVYFEKPRTTLGWKGLINDPDLDGSYAVNKGLRMARKLLLDISALGLPVGCEFLDPITPQFIADTVSWGSIGARTAASQVHRQ.

Basic and acidic residues predominate over residues 1–10; the sequence is MIDRLVRDSR. A disordered region spans residues 1-28; the sequence is MIDRLVRDSRGPVTERNPPHMSLSAGPA.

The protein belongs to the class-I DAHP synthase family.

It catalyses the reaction D-erythrose 4-phosphate + phosphoenolpyruvate + H2O = 7-phospho-2-dehydro-3-deoxy-D-arabino-heptonate + phosphate. The protein operates within metabolic intermediate biosynthesis; chorismate biosynthesis; chorismate from D-erythrose 4-phosphate and phosphoenolpyruvate: step 1/7. Its function is as follows. Stereospecific condensation of phosphoenolpyruvate (PEP) and D-erythrose-4-phosphate (E4P) giving rise to 3-deoxy-D-arabino-heptulosonate-7-phosphate (DAHP). In Amycolatopsis methanolica, this protein is Phospho-2-dehydro-3-deoxyheptonate aldolase (aroA).